The sequence spans 602 residues: ATP-dependent lipid A-core flippase 1 (602 aa).

5 helical membrane passes run 36 to 56 (LGFVAAIIGMLGYAAIDVYFL), 80 to 100 (LFIIVAFTVRGIAHFIANYCL), 154 to 174 (ILTIVQQSAFIIGLLGLMFYY), 176 to 196 (WQLSLIFLLITPIIAVIVSVV), and 261 to 281 (ASVPIIQVIASFALAFVFYAI). Residues 39–321 (VAAIIGMLGY…LTNVNSEFQQ (283 aa)) enclose the ABC transmembrane type-1 domain. An ABC transporter domain is found at 362-599 (YKNTNTMTTS…QGAYAQLHSF (238 aa)). 398 to 405 (GRSGSGKS) is an ATP binding site.

It belongs to the ABC transporter superfamily. Lipid exporter (TC 3.A.1.106) family. In terms of assembly, homodimer.

It localises to the cell inner membrane. It catalyses the reaction ATP + H2O + lipid A-core oligosaccharideSide 1 = ADP + phosphate + lipid A-core oligosaccharideSide 2.. Involved in lipopolysaccharide (LPS) biosynthesis. Translocates lipid A-core from the inner to the outer leaflet of the inner membrane. Transmembrane domains (TMD) form a pore in the inner membrane and the ATP-binding domain (NBD) is responsible for energy generation. The protein is ATP-dependent lipid A-core flippase 1 of Colwellia psychrerythraea (strain 34H / ATCC BAA-681) (Vibrio psychroerythus).